We begin with the raw amino-acid sequence, 244 residues long: tRNA pseudouridine synthase A (244 aa).

Residue Asp-52 is the Nucleophile of the active site. Residue Tyr-110 coordinates substrate.

This sequence belongs to the tRNA pseudouridine synthase TruA family. As to quaternary structure, homodimer.

The enzyme catalyses uridine(38/39/40) in tRNA = pseudouridine(38/39/40) in tRNA. Its function is as follows. Formation of pseudouridine at positions 38, 39 and 40 in the anticodon stem and loop of transfer RNAs. This chain is tRNA pseudouridine synthase A, found in Geobacter sulfurreducens (strain ATCC 51573 / DSM 12127 / PCA).